We begin with the raw amino-acid sequence, 122 residues long: UPF0102 protein RHECIAT_CH0000358 (122 aa).

Belongs to the UPF0102 family.

This is UPF0102 protein RHECIAT_CH0000358 from Rhizobium etli (strain CIAT 652).